The following is a 155-amino-acid chain: DNA gyrase inhibitor (155 aa).

This sequence belongs to the DNA gyrase inhibitor family. As to quaternary structure, interacts with DNA gyrase.

It localises to the cytoplasm. Functionally, inhibits the supercoiling activity of DNA gyrase. Acts by inhibiting DNA gyrase at an early step, prior to (or at the step of) binding of DNA by the gyrase. It protects cells against toxins that target DNA gyrase, by inhibiting activity of these toxins and reducing the formation of lethal double-strand breaks in the cell. This is DNA gyrase inhibitor from Citrobacter koseri (strain ATCC BAA-895 / CDC 4225-83 / SGSC4696).